The sequence spans 445 residues: Phosphoglucosamine mutase (445 aa).

S102 acts as the Phosphoserine intermediate in catalysis. Residues S102, D241, D243, and D245 each contribute to the Mg(2+) site. S102 carries the post-translational modification Phosphoserine.

This sequence belongs to the phosphohexose mutase family. Mg(2+) is required as a cofactor. Activated by phosphorylation.

It catalyses the reaction alpha-D-glucosamine 1-phosphate = D-glucosamine 6-phosphate. In terms of biological role, catalyzes the conversion of glucosamine-6-phosphate to glucosamine-1-phosphate. This Escherichia coli O127:H6 (strain E2348/69 / EPEC) protein is Phosphoglucosamine mutase.